The following is a 140-amino-acid chain: Large ribosomal subunit protein uL11 (140 aa).

It belongs to the universal ribosomal protein uL11 family. As to quaternary structure, part of the ribosomal stalk of the 50S ribosomal subunit. Interacts with L10 and the large rRNA to form the base of the stalk. L10 forms an elongated spine to which L12 dimers bind in a sequential fashion forming a multimeric L10(L12)X complex. One or more lysine residues are methylated.

In terms of biological role, forms part of the ribosomal stalk which helps the ribosome interact with GTP-bound translation factors. The chain is Large ribosomal subunit protein uL11 from Staphylococcus carnosus (strain TM300).